A 277-amino-acid polypeptide reads, in one-letter code: Thymidylate synthase (277 aa).

Arginine 21 is a dUMP binding site. Histidine 51 serves as a coordination point for (6R)-5,10-methylene-5,6,7,8-tetrahydrofolate. 126–127 contacts dUMP; it reads RR. The active-site Nucleophile is the cysteine 159. Residues 179 to 182, asparagine 190, and 220 to 222 each bind dUMP; these read RSAD and HLY. Position 182 (aspartate 182) interacts with (6R)-5,10-methylene-5,6,7,8-tetrahydrofolate. Serine 276 serves as a coordination point for (6R)-5,10-methylene-5,6,7,8-tetrahydrofolate.

The protein belongs to the thymidylate synthase family. Bacterial-type ThyA subfamily. Homodimer.

The protein localises to the cytoplasm. The enzyme catalyses dUMP + (6R)-5,10-methylene-5,6,7,8-tetrahydrofolate = 7,8-dihydrofolate + dTMP. It functions in the pathway pyrimidine metabolism; dTTP biosynthesis. In terms of biological role, catalyzes the reductive methylation of 2'-deoxyuridine-5'-monophosphate (dUMP) to 2'-deoxythymidine-5'-monophosphate (dTMP) while utilizing 5,10-methylenetetrahydrofolate (mTHF) as the methyl donor and reductant in the reaction, yielding dihydrofolate (DHF) as a by-product. This enzymatic reaction provides an intracellular de novo source of dTMP, an essential precursor for DNA biosynthesis. The sequence is that of Thymidylate synthase from Saccharophagus degradans (strain 2-40 / ATCC 43961 / DSM 17024).